The primary structure comprises 383 residues: Protein arginine N-methyltransferase PRMT10 (383 aa).

The interval 1–23 (MRSSQNGGAMGGRAAGTGGGGPS) is disordered. Residues 8-22 (GAMGGRAAGTGGGGP) show a composition bias toward gly residues. In terms of domain architecture, SAM-dependent MTase PRMT-type spans 29-360 (EVDYAQYFCT…KENHRLMEIE (332 aa)). 5 residues coordinate S-adenosyl-L-methionine: glutamine 45, arginine 54, glycine 78, glutamate 100, and glutamate 129. Active-site residues include glutamate 143 and glutamate 152. Residues 190-230 (DRKRNDFDGAMADWHNFSDEIKSYYGVDMGVLTKPFAEEQE) form a dimerization arm region.

This sequence belongs to the class I-like SAM-binding methyltransferase superfamily. Protein arginine N-methyltransferase family. Ring-like homodimer.

It carries out the reaction L-arginyl-[protein] + 2 S-adenosyl-L-methionine = N(omega),N(omega)-dimethyl-L-arginyl-[protein] + 2 S-adenosyl-L-homocysteine + 2 H(+). In terms of biological role, methylates (mono and asymmetric dimethylation) the guanidino nitrogens of arginyl residues in some proteins. Essential for regulating flowering time. The protein is Protein arginine N-methyltransferase PRMT10 (PRMT10) of Arabidopsis thaliana (Mouse-ear cress).